A 365-amino-acid polypeptide reads, in one-letter code: U-box domain-containing protein 56 (365 aa).

A coiled-coil region spans residues 176–281 (YEEQRRRLEI…ELLRALEKGE (106 aa)). Positions 293–365 (EPPQCFICPI…AIKDWLQQHP (73 aa)) constitute a U-box domain.

It carries out the reaction S-ubiquitinyl-[E2 ubiquitin-conjugating enzyme]-L-cysteine + [acceptor protein]-L-lysine = [E2 ubiquitin-conjugating enzyme]-L-cysteine + N(6)-ubiquitinyl-[acceptor protein]-L-lysine.. Its pathway is protein modification; protein ubiquitination. In terms of biological role, functions as an E3 ubiquitin ligase. This Arabidopsis thaliana (Mouse-ear cress) protein is U-box domain-containing protein 56 (PUB56).